Reading from the N-terminus, the 306-residue chain is Phosphoribosylaminoimidazole-succinocarboxamide synthase (306 aa).

Position 2 is an N-acetylserine (Ser-2).

It belongs to the SAICAR synthetase family. In terms of assembly, monomer.

The catalysed reaction is 5-amino-1-(5-phospho-D-ribosyl)imidazole-4-carboxylate + L-aspartate + ATP = (2S)-2-[5-amino-1-(5-phospho-beta-D-ribosyl)imidazole-4-carboxamido]succinate + ADP + phosphate + 2 H(+). The protein operates within purine metabolism; IMP biosynthesis via de novo pathway; 5-amino-1-(5-phospho-D-ribosyl)imidazole-4-carboxamide from 5-amino-1-(5-phospho-D-ribosyl)imidazole-4-carboxylate: step 1/2. Functionally, catalyzes the reaction of 4-carboxy-5-aminoimidazole ribotide (CAIR) and aspartic acid with the formation of N-succinyl-5-amino-imidazole-4-carboxamide ribotide (SAICAR) in the purine biosynthesis pathway. This is Phosphoribosylaminoimidazole-succinocarboxamide synthase (ADE1) from Saccharomyces cerevisiae (strain ATCC 204508 / S288c) (Baker's yeast).